Here is a 98-residue protein sequence, read N- to C-terminus: Citrate lyase acyl carrier protein (98 aa).

The residue at position 14 (Ser-14) is an O-(phosphoribosyl dephospho-coenzyme A)serine.

Belongs to the CitD family. As to quaternary structure, oligomer with a subunit composition of (alpha,beta,gamma)6.

The protein localises to the cytoplasm. Its function is as follows. Covalent carrier of the coenzyme of citrate lyase. This chain is Citrate lyase acyl carrier protein, found in Citrobacter koseri (strain ATCC BAA-895 / CDC 4225-83 / SGSC4696).